The sequence spans 227 residues: tRNA (guanine-N(1)-)-methyltransferase (227 aa).

Residues Gly112 and 132-137 (LGDFVL) contribute to the S-adenosyl-L-methionine site.

It belongs to the RNA methyltransferase TrmD family. Homodimer.

The protein resides in the cytoplasm. The catalysed reaction is guanosine(37) in tRNA + S-adenosyl-L-methionine = N(1)-methylguanosine(37) in tRNA + S-adenosyl-L-homocysteine + H(+). Specifically methylates guanosine-37 in various tRNAs. This chain is tRNA (guanine-N(1)-)-methyltransferase, found in Gloeobacter violaceus (strain ATCC 29082 / PCC 7421).